The chain runs to 2492 residues: Talin-A (2492 aa).

The 282-residue stretch at 84–365 (RPQKFKLLDG…GYIEIIMKAR (282 aa)) folds into the FERM domain. Residues 2250–2492 (EEDNVLEDLE…NSRKQNYNKN (243 aa)) form the I/LWEQ domain.

It localises to the cytoplasm. The protein localises to the cytoskeleton. Its subcellular location is the cell cortex. In terms of biological role, actin-binding protein that may be involved in the control of cell motility and chemotaxis. In Dictyostelium discoideum (Social amoeba), this protein is Talin-A (talA).